Reading from the N-terminus, the 2377-residue chain is DNA (cytosine-5-)-methyltransferase DMT5 (2377 aa).

The segment at 24–56 (GTADGAVNGGNIPNSQSQKRKRASPSPEIESEE) is disordered. The region spanning 62 to 126 (YEIDYIADSR…KNPGKPRLSP (65 aa)) is the Chromo; shadow subtype domain. Residues 150 to 282 (GKSRAASSTD…KSSLPKAKLR (133 aa)) are disordered. The segment covering 201–213 (PTSKKVHPNKKCK) has biased composition (basic residues). 2 stretches are compositionally biased toward acidic residues: residues 217–238 (DDESDFVFEEGEWDEDEDDDND) and 245–263 (EDDEDDEQERSAEEPESDE). The span at 268-282 (PAKKTKSSLPKAKLR) shows a compositional bias: basic residues. The region spanning 347-753 (LRVATMCSGT…IAALKVACHK (407 aa)) is the SAM-dependent MTase C5-type domain. Residue Cys440 is part of the active site. The Helicase ATP-binding domain maps to 1450–1771 (AERPVMVRGG…RSIATFMGIH (322 aa)). 1463-1470 (DQVGYGKT) lines the ATP pocket. Disordered regions lie at residues 1642 to 1680 (KGQAYRDKHDSDSKAKPITKEELERWEASEDEDDDENSK), 2313 to 2334 (KGRGSSISMTNEKRTPTLTVKS), and 2347 to 2377 (SSFRSKKRSMEARDAEGVSDDDENSELSDII). The span at 1645–1669 (AYRDKHDSDSKAKPITKEELERWEA) shows a compositional bias: basic and acidic residues. One can recognise a Helicase C-terminal domain in the interval 2152 to 2315 (KLEHLVNLIH…EIPQEEYKGR (164 aa)). Over residues 2317–2334 (SSISMTNEKRTPTLTVKS) the composition is skewed to polar residues. Positions 2363–2377 (GVSDDDENSELSDII) are enriched in acidic residues.

This sequence in the N-terminal section; belongs to the class I-like SAM-binding methyltransferase superfamily. C5-methyltransferase family. The protein in the C-terminal section; belongs to the SNF2/RAD54 helicase family. As to quaternary structure, interacts with SWI6. Requires Mg(2+) as cofactor.

The protein resides in the nucleus. The protein localises to the chromosome. It carries out the reaction a 2'-deoxycytidine in DNA + S-adenosyl-L-methionine + ATP + H2O = a 5-methyl-2'-deoxycytidine in DNA + S-adenosyl-L-homocysteine + ADP + phosphate + 2 H(+). Its activity is regulated as follows. Hemimethylated DNA substrates stimulate ATP hydrolysis and this is a prerequisite for methyltransferase activity. Functionally, ATP-dependent cytosine methylase that maintains DNA methylation by acting at hemimethylated palindromic 5'-CG-3' sites to produce symmetrically methylated DNA strands. DNA methylation may play a role in transcriptional silencing, particularly at transposable elements. In Cryptococcus neoformans var. grubii serotype A (strain H99 / ATCC 208821 / CBS 10515 / FGSC 9487) (Filobasidiella neoformans var. grubii), this protein is DNA (cytosine-5-)-methyltransferase DMT5.